Here is a 351-residue protein sequence, read N- to C-terminus: Protein Wnt-8b (351 aa).

Residues 1 to 22 (MFLSKPSVYICLFTCVLQLSHS) form the signal peptide. The cysteines at positions 54 and 65 are disulfide-linked. Asn103 is a glycosylation site (N-linked (GlcNAc...) asparagine). Cystine bridges form between Cys104–Cys112, Cys114–Cys132, Cys180–Cys194, Cys182–Cys189, Cys256–Cys294, Cys272–Cys287, Cys291–Cys333, Cys309–Cys324, Cys311–Cys321, and Cys316–Cys317. Ser186 carries the O-palmitoleoyl serine lipid modification. Asn259 carries N-linked (GlcNAc...) asparagine glycosylation.

The protein belongs to the Wnt family. In terms of processing, palmitoleoylation is required for efficient binding to frizzled receptors. Depalmitoleoylation leads to Wnt signaling pathway inhibition. Post-translationally, proteolytic processing by TIKI1 and TIKI2 promotes oxidation and formation of large disulfide-bond oligomers, leading to inactivation of WNT8B. In terms of tissue distribution, expression is restricted to the brain, and more specifically to the forebrain.

It localises to the secreted. It is found in the extracellular space. The protein resides in the extracellular matrix. Ligand for members of the frizzled family of seven transmembrane receptors. May play an important role in the development and differentiation of certain forebrain structures, notably the hippocampus. The sequence is that of Protein Wnt-8b (WNT8B) from Homo sapiens (Human).